The following is a 203-amino-acid chain: Large ribosomal subunit protein bL25 (203 aa).

This sequence belongs to the bacterial ribosomal protein bL25 family. CTC subfamily. As to quaternary structure, part of the 50S ribosomal subunit; part of the 5S rRNA/L5/L18/L25 subcomplex. Contacts the 5S rRNA. Binds to the 5S rRNA independently of L5 and L18.

Functionally, this is one of the proteins that binds to the 5S RNA in the ribosome where it forms part of the central protuberance. The chain is Large ribosomal subunit protein bL25 from Cereibacter sphaeroides (strain ATCC 17025 / ATH 2.4.3) (Rhodobacter sphaeroides).